The following is a 190-amino-acid chain: Imidazoleglycerol-phosphate dehydratase (190 aa).

The protein belongs to the imidazoleglycerol-phosphate dehydratase family.

It is found in the cytoplasm. It catalyses the reaction D-erythro-1-(imidazol-4-yl)glycerol 3-phosphate = 3-(imidazol-4-yl)-2-oxopropyl phosphate + H2O. Its pathway is amino-acid biosynthesis; L-histidine biosynthesis; L-histidine from 5-phospho-alpha-D-ribose 1-diphosphate: step 6/9. This is Imidazoleglycerol-phosphate dehydratase from Wolinella succinogenes (strain ATCC 29543 / DSM 1740 / CCUG 13145 / JCM 31913 / LMG 7466 / NCTC 11488 / FDC 602W) (Vibrio succinogenes).